The sequence spans 150 residues: Transcriptional regulator MraZ (150 aa).

2 consecutive SpoVT-AbrB domains span residues 7–55 (SHAI…PEPE) and 84–127 (AALM…SEES).

Belongs to the MraZ family. Forms oligomers.

The protein resides in the cytoplasm. It is found in the nucleoid. This is Transcriptional regulator MraZ from Marinobacter nauticus (strain ATCC 700491 / DSM 11845 / VT8) (Marinobacter aquaeolei).